A 298-amino-acid polypeptide reads, in one-letter code: ADP-ribosyl cyclase/cyclic ADP-ribose hydrolase 1 (298 aa).

Residues Met-1–Gln-21 lie on the Cytoplasmic side of the membrane. A helical; Signal-anchor for type II membrane protein membrane pass occupies residues Val-22–Val-42. Topologically, residues Leu-43–Met-298 are extracellular. Disulfide bonds link Cys-64–Cys-80, Cys-97–Cys-178, and Cys-158–Cys-171. An N-linked (GlcNAc...) asparagine glycan is attached at Asn-98. The active site involves Cys-117. Asn-118 is a glycosylation site (N-linked (GlcNAc...) asparagine). The N-linked (GlcNAc...) asparagine glycan is linked to Asn-177. Residue Cys-199 is part of the active site. N-linked (GlcNAc...) asparagine glycans are attached at residues Asn-207 and Asn-268. 2 disulfides stabilise this stretch: Cys-252–Cys-273 and Cys-285–Cys-294.

The protein belongs to the ADP-ribosyl cyclase family. As to quaternary structure, homodimer. As to expression, osteoclasts.

It localises to the cell membrane. Its subcellular location is the microsome membrane. The protein localises to the endoplasmic reticulum membrane. It catalyses the reaction NAD(+) = cyclic ADP-beta-D-ribose + nicotinamide + H(+). The enzyme catalyses 2'-phospho-cyclic ADP-ribose + nicotinate = nicotinate-adenine dinucleotide phosphate. The catalysed reaction is NAD(+) + H2O = ADP-D-ribose + nicotinamide + H(+). It carries out the reaction nicotinate + NADP(+) = nicotinate-adenine dinucleotide phosphate + nicotinamide. Functionally, synthesizes cyclic ADP-ribose (cADPR), a second messenger for glucose-induced insulin secretion. Synthesizes the Ca(2+) mobilizer nicotinate-adenine dinucleotide phosphate, NAADP(+), from 2'-phospho-cADPR and nicotinic acid, as well as from NADP(+) and nicotinic acid. Also has cADPR hydrolase activity. This chain is ADP-ribosyl cyclase/cyclic ADP-ribose hydrolase 1 (CD38), found in Oryctolagus cuniculus (Rabbit).